The following is a 332-amino-acid chain: Ectoine dioxygenase (332 aa).

The segment covering Met-1 to Pro-10 has biased composition (polar residues). Residues Met-1 to Pro-47 are disordered. Gln-163 provides a ligand contact to L-ectoine. Lys-169 contacts 2-oxoglutarate. Fe cation is bound by residues His-180, Asp-182, and His-281.

It belongs to the PhyH family. EctD subfamily. Homodimer. Requires Fe(2+) as cofactor.

The enzyme catalyses L-ectoine + 2-oxoglutarate + O2 = 5-hydroxyectoine + succinate + CO2. Involved in the biosynthesis of 5-hydroxyectoine, called compatible solute, which helps organisms to survive extreme osmotic stress by acting as a highly soluble organic osmolyte. Catalyzes the 2-oxoglutarate-dependent selective hydroxylation of L-ectoine to yield (4S,5S)-5-hydroxyectoine. The chain is Ectoine dioxygenase from Halomonas elongata (strain ATCC 33173 / DSM 2581 / NBRC 15536 / NCIMB 2198 / 1H9).